A 430-amino-acid chain; its full sequence is Paraneoplastic antigen-like protein 8A (430 aa).

Residues 219-228 (WKNTEDHGDP) show a composition bias toward basic and acidic residues. 3 disordered regions span residues 219-270 (WKNT…NSNY), 313-364 (DPSD…RKKK), and 392-430 (GLGA…SRKL). The segment covering 232–250 (LVRRPGGKIRSRRRKQKKN) has biased composition (basic residues). Residues 261–270 (SQGSNYNSNY) show a composition bias toward polar residues.

This sequence belongs to the PNMA family.

In Mus musculus (Mouse), this protein is Paraneoplastic antigen-like protein 8A.